A 291-amino-acid chain; its full sequence is Light-independent protochlorophyllide reductase iron-sulfur ATP-binding protein (291 aa).

ATP-binding positions include 10-15 and K39; that span reads GIGKST. A Mg(2+)-binding site is contributed by S14. [4Fe-4S] cluster-binding residues include C95 and C129. An ATP-binding site is contributed by 180-181; sequence NR.

This sequence belongs to the NifH/BchL/ChlL family. In terms of assembly, homodimer. Protochlorophyllide reductase is composed of three subunits; ChlL, ChlN and ChlB. [4Fe-4S] cluster serves as cofactor.

The protein resides in the plastid. Its subcellular location is the chloroplast. The enzyme catalyses chlorophyllide a + oxidized 2[4Fe-4S]-[ferredoxin] + 2 ADP + 2 phosphate = protochlorophyllide a + reduced 2[4Fe-4S]-[ferredoxin] + 2 ATP + 2 H2O. It participates in porphyrin-containing compound metabolism; chlorophyll biosynthesis (light-independent). Component of the dark-operative protochlorophyllide reductase (DPOR) that uses Mg-ATP and reduced ferredoxin to reduce ring D of protochlorophyllide (Pchlide) to form chlorophyllide a (Chlide). This reaction is light-independent. The L component serves as a unique electron donor to the NB-component of the complex, and binds Mg-ATP. The chain is Light-independent protochlorophyllide reductase iron-sulfur ATP-binding protein from Larix decidua (European larch).